A 396-amino-acid polypeptide reads, in one-letter code: Elongation factor Tu (396 aa).

The 196-residue stretch at 10-205 (KPHVNIGTIG…AVDESIPAPV (196 aa)) folds into the tr-type G domain. Residues 19–26 (GHVDHGKT) are G1. 19 to 26 (GHVDHGKT) provides a ligand contact to GTP. Thr26 is a Mg(2+) binding site. Residues 62–66 (GITIN) form a G2 region. The interval 83 to 86 (DAPG) is G3. GTP-binding positions include 83–87 (DAPGH) and 138–141 (NKSD). Residues 138 to 141 (NKSD) are G4. Positions 175–177 (SAL) are G5.

The protein belongs to the TRAFAC class translation factor GTPase superfamily. Classic translation factor GTPase family. EF-Tu/EF-1A subfamily. Monomer.

It is found in the cytoplasm. It carries out the reaction GTP + H2O = GDP + phosphate + H(+). Its function is as follows. GTP hydrolase that promotes the GTP-dependent binding of aminoacyl-tRNA to the A-site of ribosomes during protein biosynthesis. The protein is Elongation factor Tu of Mycobacterium leprae (strain Br4923).